We begin with the raw amino-acid sequence, 301 residues long: Mating type protein mtA-1 (301 aa).

The alpha box DNA-binding region spans 49-104 (APKKKVNGFMGFRSYYSSLFSQFPQKARSPFMTILWQHDPFHNEWDFMCSVYSSIR).

This sequence belongs to the MATALPHA1 family.

Its subcellular location is the nucleus. Functionally, mating type proteins are sequence specific DNA-binding proteins that act as master switches in fungal differentiation by controlling gene expression in a cell type-specific fashion. Transcriptional activator that induces the transcription of alpha-specific genes. In Sordaria fimicola, this protein is Mating type protein mtA-1 (MTA1).